A 38-amino-acid chain; its full sequence is Photosystem II reaction center protein L (38 aa).

The chain crosses the membrane as a helical span at residues 17–37 (SLYWGLLLIFVLAVSFSNYFF).

The protein belongs to the PsbL family. In terms of assembly, PSII is composed of 1 copy each of membrane proteins PsbA, PsbB, PsbC, PsbD, PsbE, PsbF, PsbH, PsbI, PsbJ, PsbK, PsbL, PsbM, PsbT, PsbX, PsbY, PsbZ, Psb30/Ycf12, at least 3 peripheral proteins of the oxygen-evolving complex and a large number of cofactors. It forms dimeric complexes.

Its subcellular location is the plastid membrane. In terms of biological role, one of the components of the core complex of photosystem II (PSII). PSII is a light-driven water:plastoquinone oxidoreductase that uses light energy to abstract electrons from H(2)O, generating O(2) and a proton gradient subsequently used for ATP formation. It consists of a core antenna complex that captures photons, and an electron transfer chain that converts photonic excitation into a charge separation. This subunit is found at the monomer-monomer interface and is required for correct PSII assembly and/or dimerization. This is Photosystem II reaction center protein L from Aneura mirabilis (Parasitic liverwort).